We begin with the raw amino-acid sequence, 1311 residues long: Zinc finger protein 521 (1311 aa).

The span at 1 to 10 shows a compositional bias: basic residues; that stretch reads MSRRKQAKPR. The interval 1–37 is disordered; it reads MSRRKQAKPRSLKDPNCKLEDKTEDGEALDCKKRPED. Residues 11–21 are compositionally biased toward basic and acidic residues; that stretch reads SLKDPNCKLED. The segment at 47-67 adopts a C2H2-type 1; degenerate zinc-finger fold; that stretch reads HSCDSCLQVFESLSDITEHKI. Positions 81 to 108 are disordered; sequence DPTCSWPASSPSSKDQTSPSHGEGCDFG. A compositionally biased stretch (low complexity) spans 87-102; it reads PASSPSSKDQTSPSHG. 7 C2H2-type zinc fingers span residues 118–140, 146–168, 174–196, 202–224, 246–269, 281–304, and 310–332; these read YPCQFCDKSFSRLSYLKHHEQSH, FKCTYCSRLFKHKRSRDRHIKLH, YHCSECDAAFSRSDHLKIHLKTH, YKCAICRRGFLSSSSLHGHMQVH, QKCSQCEEGFDFPEDLQKHIAECH, LQCVYCHELFVEETSLMNHMEQVH, and NSCSICSESFHTVEELYSHMDSH. Residues 349–358 show a composition bias toward low complexity; it reads VGYTSVSSTT. The segment at 349 to 397 is disordered; sequence VGYTSVSSTTPDSNLSVDSSTMVEAAPPIPKSRGRKRAAQQTPDMTGPS. 2 stretches are compositionally biased toward polar residues: residues 359-370 and 387-397; these read PDSNLSVDSSTM and AQQTPDMTGPS. A C2H2-type 9; degenerate zinc finger spans residues 405 to 429; that stretch reads YSCIYCNKQLFSSLAVLQIHLKTMH. 3 consecutive C2H2-type zinc fingers follow at residues 437 to 460, 477 to 500, and 513 to 536; these read HICQYCLEVLPSLYNLNEHLKQVH, YQCNFCSEVVNDLNTLQEHIRCSH, and FFCPHCYMGFLTDSSLEEHIRQVH. Phosphoserine is present on S546. A C2H2-type 13; atypical zinc finger spans residues 560-585; the sequence is YSCSYCTNSPIFNSVLKLNKHIKENH. S605 and S608 each carry phosphoserine. 7 consecutive C2H2-type zinc fingers follow at residues 634–656, 664–686, 694–717, 722–745, 752–775, 783–805, and 809–832; these read YICNQCGAKYTSLDSFQTHLKTH, LTCPQCNKEFPNQESLLKHVTIH, YICESCDKQFTSVDDLQKHLLDMH, FRCTLCQEVFDSKVSIQLHLAVKH, YRCTSCNWDFRNETDLQLHVKHNH, HKCIFCGESFGTEVELQCHITTH, and YNCKFCSKAFHAIILLEKHLREKH. Residues 863–882 form a disordered region; sequence TNSQESHNSHDGSEEDVDTS. The C2H2-type 21; degenerate zinc-finger motif lies at 886-908; sequence YGCDICGAAYTMETLLQNHQLRD. C2H2-type zinc fingers lie at residues 930–952, 959–981, and 1020–1042; these read YKCNVCSRTFFSENGLREHMQTH, YMCPICGERFPSLLTLTEHKVTH, and FRCVVCMQTVTSTLELKIHGTFH. The segment at 1065–1083 adopts a C2H2-type 25; degenerate zinc-finger fold; that stretch reads YKCASCLKEFRSKQDLVKL. The segment at 1138–1161 adopts a C2H2-type 26 zinc-finger fold; it reads TRCSSCNVKFESESELQNHIQTIH. Residue K1146 forms a Glycyl lysine isopeptide (Lys-Gly) (interchain with G-Cter in SUMO2) linkage. The segment covering 1168–1178 has biased composition (polar residues); sequence SNSTQLKTPQV. Residues 1168–1188 are disordered; that stretch reads SNSTQLKTPQVSPMPRISPSQ. 4 consecutive C2H2-type zinc fingers follow at residues 1195 to 1217, 1225 to 1247, 1256 to 1279, and 1286 to 1309; these read YQCIKCQMVFYNEWDIQVHVANH, HECKLCSQTFDSPAKLQCHLIEH, FKCPVCFTVFVQANKLQQHIFSAH, and YDCTQCPQKFFFQTELQNHTMTQH.

The protein belongs to the krueppel C2H2-type zinc-finger protein family. As to quaternary structure, interacts with EBF1. Interacts with SMAD1 and SMAD4. In terms of tissue distribution, predominantly expressed in hematopoietic cells. Present in organs and tissues that contain stem and progenitor cells, myeloid and/or lymphoid: placenta, spleen, lymph nodes, thymus, bone marrow and fetal liver. Within the hematopoietic system, it is abundant in CD34(+) cells but undetectable in mature peripheral blood leukocytes, and its levels rapidly decrease during the differentiation of CD34(+) cells in response to hemopoietins.

It is found in the nucleus. Transcription factor that can both act as an activator or a repressor depending on the context. Involved in BMP signaling and in the regulation of the immature compartment of the hematopoietic system. Associates with SMADs in response to BMP2 leading to activate transcription of BMP target genes. Acts as a transcriptional repressor via its interaction with EBF1, a transcription factor involved specification of B-cell lineage; this interaction preventing EBF1 to bind DNA and activate target genes. The polypeptide is Zinc finger protein 521 (ZNF521) (Homo sapiens (Human)).